The sequence spans 399 residues: MRLETLPSEFQEALPVLEKIKAAGFEAYFVGGSVRDALLQRPIHDVDIASSSYPEETKRIFDRTVDVGIEHGTVLVLENNREYEVTTFRTEDVYVDYRRPSKVSFVRSLEEDLKRRDFTINALALDENGQVIDLFQGLDDLENQILRAVGTAAERFNEDALRIMRGFRFQAALDFDLEQDTFAAMKDCAPLLEKISVERIFIEFDKLLLAPFWRKGLEALLTSGAIEFLPDLKGSRAKLERLFDLASDFRFSASEQAWAALLLALDVQNVKGFLKKWKTSREFAKKAEDLVEIAAIRSERDLTKRDCYDYDIDLLLQAEELRQAQGLPVDFSAIQNLDASLTIHNKQEMVVNGGMLMQEFGFEPGPKLGQILKELEHAIVDGCLPNDLEAVYAYIEEKK.

Glycine 32 and arginine 35 together coordinate ATP. CTP is bound by residues glycine 32 and arginine 35. 2 residues coordinate Mg(2+): aspartate 45 and aspartate 47. Residues arginine 116, aspartate 159, arginine 162, arginine 165, and arginine 168 each contribute to the ATP site. The CTP site is built by arginine 116, aspartate 159, arginine 162, arginine 165, and arginine 168.

It belongs to the tRNA nucleotidyltransferase/poly(A) polymerase family. Bacterial CCA-adding enzyme type 3 subfamily. Homodimer. It depends on Mg(2+) as a cofactor.

The catalysed reaction is a tRNA precursor + 2 CTP + ATP = a tRNA with a 3' CCA end + 3 diphosphate. It catalyses the reaction a tRNA with a 3' CCA end + 2 CTP + ATP = a tRNA with a 3' CCACCA end + 3 diphosphate. Its function is as follows. Catalyzes the addition and repair of the essential 3'-terminal CCA sequence in tRNAs without using a nucleic acid template. Adds these three nucleotides in the order of C, C, and A to the tRNA nucleotide-73, using CTP and ATP as substrates and producing inorganic pyrophosphate. tRNA 3'-terminal CCA addition is required both for tRNA processing and repair. Also involved in tRNA surveillance by mediating tandem CCA addition to generate a CCACCA at the 3' terminus of unstable tRNAs. While stable tRNAs receive only 3'-terminal CCA, unstable tRNAs are marked with CCACCA and rapidly degraded. The polypeptide is CCA-adding enzyme (Streptococcus sanguinis (strain SK36)).